The primary structure comprises 257 residues: Snake venom serine protease nikobin (257 aa).

A signal peptide spans 1–18 (MVLIRVLANLLLLQLSYA). The propeptide occupies 19–24 (QKSSEL). Positions 25-248 (VIGGDECNIN…YSDWIQSIIA (224 aa)) constitute a Peptidase S1 domain. 6 disulfide bridges follow: Cys-31–Cys-162, Cys-49–Cys-65, Cys-97–Cys-255, Cys-141–Cys-209, Cys-173–Cys-188, and Cys-199–Cys-224. Catalysis depends on charge relay system residues His-64 and Asp-109. Residues Asn-120 and Asn-121 are each glycosylated (N-linked (GlcNAc...) asparagine). The active-site Charge relay system is the Ser-203. Asn-250 carries N-linked (GlcNAc...) asparagine glycosylation.

It belongs to the peptidase S1 family. Snake venom subfamily. As to quaternary structure, monomer. Expressed by the venom gland.

The protein resides in the secreted. Its function is as follows. Snake venom serine protease that may act in the hemostasis system of the prey. The sequence is that of Snake venom serine protease nikobin (sp-VN) from Vipera nikolskii (Nikolsky's adder).